The chain runs to 123 residues: UPF0102 protein PputGB1_4524 (123 aa).

Belongs to the UPF0102 family.

The polypeptide is UPF0102 protein PputGB1_4524 (Pseudomonas putida (strain GB-1)).